The following is a 461-amino-acid chain: uncharacterized protein (461 aa).

The segment covering 1-19 (MEKCSHESGRHSAENDGKY) has biased composition (basic and acidic residues). The disordered stretch occupies residues 1–21 (MEKCSHESGRHSAENDGKYDI).

Belongs to the CapA family.

Could be involved in the biosynthesis of a cell wall component. This is an uncharacterized protein from Sinorhizobium fredii (strain NBRC 101917 / NGR234).